Reading from the N-terminus, the 482-residue chain is Probable cytosol aminopeptidase (482 aa).

2 residues coordinate Mn(2+): lysine 251 and aspartate 256. The active site involves lysine 263. 3 residues coordinate Mn(2+): aspartate 274, aspartate 333, and glutamate 335. Arginine 337 is a catalytic residue.

Belongs to the peptidase M17 family. The cofactor is Mn(2+).

Its subcellular location is the cytoplasm. It catalyses the reaction Release of an N-terminal amino acid, Xaa-|-Yaa-, in which Xaa is preferably Leu, but may be other amino acids including Pro although not Arg or Lys, and Yaa may be Pro. Amino acid amides and methyl esters are also readily hydrolyzed, but rates on arylamides are exceedingly low.. The enzyme catalyses Release of an N-terminal amino acid, preferentially leucine, but not glutamic or aspartic acids.. Presumably involved in the processing and regular turnover of intracellular proteins. Catalyzes the removal of unsubstituted N-terminal amino acids from various peptides. This is Probable cytosol aminopeptidase from Acinetobacter baumannii (strain SDF).